We begin with the raw amino-acid sequence, 157 residues long: 3-hydroxyacyl-[acyl-carrier-protein] dehydratase FabZ (157 aa).

H58 is a catalytic residue.

Belongs to the thioester dehydratase family. FabZ subfamily.

It is found in the cytoplasm. It carries out the reaction a (3R)-hydroxyacyl-[ACP] = a (2E)-enoyl-[ACP] + H2O. Involved in unsaturated fatty acids biosynthesis. Catalyzes the dehydration of short chain beta-hydroxyacyl-ACPs and long chain saturated and unsaturated beta-hydroxyacyl-ACPs. The sequence is that of 3-hydroxyacyl-[acyl-carrier-protein] dehydratase FabZ from Brucella abortus biovar 1 (strain 9-941).